The primary structure comprises 402 residues: Tol-Pal system protein TolB (402 aa).

An N-terminal signal peptide occupies residues 1–17 (MKKIVAIFLVFLGSLWA).

This sequence belongs to the TolB family. In terms of assembly, the Tol-Pal system is composed of five core proteins: the inner membrane proteins TolA, TolQ and TolR, the periplasmic protein TolB and the outer membrane protein Pal. They form a network linking the inner and outer membranes and the peptidoglycan layer.

It is found in the periplasm. In terms of biological role, part of the Tol-Pal system, which plays a role in outer membrane invagination during cell division and is important for maintaining outer membrane integrity. The protein is Tol-Pal system protein TolB of Campylobacter jejuni (strain RM1221).